We begin with the raw amino-acid sequence, 602 residues long: Multiple epidermal growth factor-like domains protein 9 (602 aa).

Positions 1 to 30 (MNGGAERAMRSLPSLGGLALLCCAAAAAAA) are cleaved as a signal peptide. The Extracellular segment spans residues 31-514 (AVASAASAGN…LADVSWTQFN (484 aa)). The disordered stretch occupies residues 38–199 (AGNVTGGGGA…PATEAPSSPP (162 aa)). Asn40 carries N-linked (GlcNAc...) asparagine glycosylation. Composition is skewed to low complexity over residues 68–85 (PRAT…PPRA) and 139–166 (APTR…TVPA). Residues 167-176 (PTTPRTPTPD) show a composition bias toward pro residues. N-linked (GlcNAc...) asparagine glycosylation is present at Asn182. A compositionally biased stretch (pro residues) spans 187-199 (PTPPATEAPSSPP). Intrachain disulfides connect Cys204/Cys217, Cys206/Cys224, Cys226/Cys235, Cys238/Cys251, Cys254/Cys266, Cys256/Cys272, Cys274/Cys283, Cys286/Cys298, Cys301/Cys310, Cys303/Cys317, Cys320/Cys329, Cys332/Cys346, Cys349/Cys360, Cys351/Cys371, Cys374/Cys383, Cys386/Cys397, Cys400/Cys415, Cys402/Cys422, Cys425/Cys434, and Cys437/Cys449. 5 consecutive Laminin EGF-like domains span residues 204-253 (CNCS…LCQP), 254-300 (CDCS…GCLP), 301-348 (CQCN…ECLR), 349-399 (CPCS…ICRK), and 400-451 (CQCH…NCIK). Asn205 and Asn218 each carry an N-linked (GlcNAc...) asparagine glycan. Asn245 carries an N-linked (GlcNAc...) asparagine glycan. A glycan (N-linked (GlcNAc...) asparagine) is linked at Asn267. Asn305 carries an N-linked (GlcNAc...) asparagine glycan. Asn428 carries an N-linked (GlcNAc...) asparagine glycan. 3 N-linked (GlcNAc...) asparagine glycosylation sites follow: Asn468, Asn481, and Asn500. The chain crosses the membrane as a helical span at residues 515–535 (IIILTVIIIVVVLLMGFVGAV). Residues 536-602 (YMYREYQNRK…LTTPIHNYKA (67 aa)) are Cytoplasmic-facing.

The protein resides in the membrane. The polypeptide is Multiple epidermal growth factor-like domains protein 9 (MEGF9) (Homo sapiens (Human)).